The chain runs to 186 residues: Dynactin subunit 3 (186 aa).

An N-acetylalanine modification is found at alanine 2. Residues 135 to 157 (QQQDQCVEITEESKALLEEYNKT) adopt a coiled-coil conformation.

It belongs to the dynactin subunit 3 family. In terms of assembly, subunit of dynactin, a multiprotein complex part of a tripartite complex with dynein and a adapter, such as BICDL1, BICD2 or HOOK3. The dynactin complex is built around ACTR1A/ACTB filament and consists of an actin-related filament composed of a shoulder domain, a pointed end and a barbed end. Its length is defined by its flexible shoulder domain. The soulder is composed of 2 DCTN1 subunits, 4 DCTN2 and 2 DCTN3. The 4 DCNT2 (via N-terminus) bind the ACTR1A filament and act as molecular rulers to determine the length. The pointed end is important for binding dynein-dynactin cargo adapters. Consists of 4 subunits: ACTR10, DCNT4, DCTN5 and DCTN6. The barbed end is composed of a CAPZA1:CAPZB heterodimers, which binds ACTR1A/ACTB filament and dynactin and stabilizes dynactin. As to expression, ubiquitously expressed. Highly expressed in muscle and pancreas and detected at lower levels in brain.

Its subcellular location is the cytoplasm. The protein resides in the cytoskeleton. The protein localises to the microtubule organizing center. It is found in the centrosome. It localises to the chromosome. Its subcellular location is the centromere. The protein resides in the kinetochore. The protein localises to the spindle. It is found in the cleavage furrow. It localises to the midbody. In terms of biological role, part of the dynactin complex that activates the molecular motor dynein for ultra-processive transport along microtubules. Together with dynein may be involved in spindle assembly and cytokinesis. The chain is Dynactin subunit 3 from Homo sapiens (Human).